We begin with the raw amino-acid sequence, 856 residues long: MISPDKRYEADTNLYNPSEIEKKWQSIWTENNLYKTDELTENSDKFYALSMFPYPSGNLHMGHVRNYVITDLIARFQRFKGKSVLHPMGWDAFGLPAENAAIERGISPSVWTKKNISHMKSQLKLLGLSVDWDREFATCDENYYIWTQYLFLELYKSGLVYQKESEVNWDPIDNTVLANEQVDSEGKSWRSGAVVEKKLLKQWFLRITNYADELLKDLEKLDNWPERVKIMQDNWIGKSIGANINFNINTNPEKNITVFTTRPDTLFGVTYLAISVNHSLIKKITDQETIQDIENLKQYLKDNKNNELEKIGIKTSLIAINPVNSEPIPIWVASYVLDEYGTGAVMGVPAHDLRDFEFAKKNNIDIKQVIVKDKSEQSNELDNAYVENGYLINSNHYNGLANTIAKLKIAEEGVNNGWAENKIQYRLRDWLISRQRYWGCPIPIVNCKKCGAVPLNQSDLPVSLPKDIEISANKINALGNNNDWINTTCPKCGIGARKETDTMDTFMCSSWYFLRYPSSKCSTKPFEKNEINKWLPVDQYVGGVEHAILHLLYARFFTKALRDNELFDIDEPFKKLLTQGMVQSAAYKNNKTGKYVSPSDITDLSNPTDPIDNSKLEVLFEKMSKSKYNGIDPESVIKKYGADTARMFILFKAPPEKDLEWGDTDVEGQFRFLSRIWKLYINCAKNINSKSNSHPDKEKSLIKSMNIAIKEISNDILNNQFNTAISELMKFYNSLSNSINDINNNLKIDALKTFCILLAPFAPHIAEEIWHLIGFKKSVHLEHWPSFNAEALKEDSYELVIQVNGKVRDKVNINNDMSEDQIKELTLKRPNILKWTQDKEIRKIIIVKGKIMNIVV.

The 'HIGH' region motif lies at 53-63; the sequence is PYPSGNLHMGH. The 'KMSKS' region motif lies at 622–626; that stretch reads KMSKS. Lys-625 is an ATP binding site.

It belongs to the class-I aminoacyl-tRNA synthetase family.

The protein localises to the cytoplasm. The catalysed reaction is tRNA(Leu) + L-leucine + ATP = L-leucyl-tRNA(Leu) + AMP + diphosphate. The polypeptide is Leucine--tRNA ligase (Prochlorococcus marinus (strain AS9601)).